Here is a 455-residue protein sequence, read N- to C-terminus: Protein chibby homolog 2 (455 aa).

Phosphoserine occurs at positions 41, 86, 89, 97, 124, 144, 148, and 150. Residues 160–197 (KRLAKECLLQENKTLREENRALREENRMLRKENKILQV) are a coiled coil. S211 and S225 each carry phosphoserine. The stretch at 240 to 266 (GRENSTLQLLREENRALQQLLEQRKAY) forms a coiled coil. The interval 267–318 (WAQPDEKAASTEEIKPISSPHEEPHGLLPDPGPGLPSPFEEPKGLPAPPDDS) is disordered. Over residues 270-291 (PDEKAASTEEIKPISSPHEEPH) the composition is skewed to basic and acidic residues. Phosphoserine is present on residues S276 and S332. The stretch at 350–421 (SQSLELLREM…KLKLQQKLVI (72 aa)) forms a coiled coil.

This sequence belongs to the chibby family. SPERT subfamily. In terms of assembly, homodimer. Binds to NEK1.

This chain is Protein chibby homolog 2 (CBY2), found in Bos taurus (Bovine).